A 2196-amino-acid chain; its full sequence is Cell polarity protein mor2 (2196 aa).

To yeast TAO3/PAG1.

It localises to the cytoplasm. The protein resides in the membrane. Its function is as follows. Required for the maintenance of cell polarity. Has a role in localizing F-actin at the cell tips. The chain is Cell polarity protein mor2 (mor2) from Schizosaccharomyces pombe (strain 972 / ATCC 24843) (Fission yeast).